Consider the following 1117-residue polypeptide: Sodium-driven chloride bicarbonate exchanger (1117 aa).

Disordered regions lie at residues 1–23 (MEIK…EEAV) and 58–97 (GRKS…TPSQ). The Cytoplasmic segment spans residues 1–508 (MEIKDQGAQM…DFRDAFSLQC (508 aa)). The segment covering 59–76 (RKSHRRHRHRGHKHRKRD) has biased composition (basic residues). Phosphoserine is present on S89. T94 carries the post-translational modification Phosphothreonine. Residue S275 is modified to Phosphoserine. Disordered regions lie at residues 282 to 309 (DFSK…KGPP) and 431 to 476 (WDPS…PELQ). A helical membrane pass occupies residues 509 to 529 (LASFLFLYCACMSPVITFGGL). Topologically, residues 530–537 (LGEATEGR) are extracellular. A helical transmembrane segment spans residues 538-558 (ISAIESLFGASMTGIAYSLFG). The Cytoplasmic segment spans residues 559 to 561 (GQP). Residues 562-582 (LTILGSTGPVLVFEKILFKFC) traverse the membrane as a helical segment. The Extracellular portion of the chain corresponds to 583–595 (KEYGLSYLSLRAS). Residues 596-616 (IGLWTATLCIILVATDASSLV) form a helical membrane-spanning segment. Over 617–625 (CYITRFTEE) the chain is Cytoplasmic. A helical membrane pass occupies residues 626–646 (AFASLICIIFIYEALEKLFEL). The Extracellular segment spans residues 647–719 (SESYPINMHN…VGRACGHGHP (73 aa)). 3 N-linked (GlcNAc...) asparagine glycosylation sites follow: N676, N686, and N696. The helical transmembrane segment at 720–740 (YVPDVLFWSVILFFSTVTMSA) threads the bilayer. At 741 to 761 (TLKQFKTSRYFPTKVRSIVSD) the chain is on the cytoplasmic side. A helical transmembrane segment spans residues 762–782 (FAVFLTILCMVLIDYAIGIPS). Residues 783-808 (PKLQVPSVFKPTRDDRGWFVTPLGPN) lie on the Extracellular side of the membrane. Residues 809-829 (PWWTIIAAIIPALLCTILIFM) form a helical membrane-spanning segment. The Cytoplasmic portion of the chain corresponds to 830–854 (DQQITAVIINRKEHKLKKGCGYHLD). A helical transmembrane segment spans residues 855-875 (LLMVAVMLGVCSIMGLPWFVA). The Extracellular portion of the chain corresponds to 876–911 (ATVLSITHVNSLKLESECSAPGEQPKFLGIREQRVT). A helical membrane pass occupies residues 912-932 (GLMIFILMGSSVFMTSILKFI). The Cytoplasmic segment spans residues 933–934 (PM). Residues 935-955 (PVLYGVFLYMGASSLKGIQLF) traverse the membrane as a helical segment. Residues 956–997 (DRIKLFWMPAKHQPDFIYLRHVPLRKVHLFTVIQMSCLGLLW) lie on the Extracellular side of the membrane. Residues 998–1018 (IIKVSRAAIVFPMMVLALVFV) traverse the membrane as a helical segment. Over 1019-1117 (RKLMDFLFTK…SRFPSKSSPS (99 aa)) the chain is Cytoplasmic. A phosphoserine mark is found at S1056 and S1084.

The protein belongs to the anion exchanger (TC 2.A.31) family. Post-translationally, N-glycosylated. In terms of tissue distribution, in the brain, detected in cerebral cortex, subcortex, cerebellum, hippocampus and medulla (at protein level). Expressed in neurons but not in astrocytes (at protein level). Isoforms starting with Met-Glu-Ile-Lys are found predominantly in the brain with lower levels in the eye while isoforms starting with Met-Cys-Asp-Leu are most abundant in the kidney with lower levels in the duodenum, jejunum and ileum (at protein level). In the kidney, isoforms starting with Met-Cys-Asp-Leu are primarily expressed in the cortex, the outer stripe of the outer medulla and the inner stripe of the outer medulla (ISOM) but are not detectable in the inner medulla (IM) while isoforms starting with Met-Glu-Ile-Lys are predominantly expressed in the ISOM and IM. Expressed in the brain, in the hippocampus as well as in dentate gyrus, cortical layers, cerebellum, olfactory bulb and in the epithelial cells of the choroid plexus. Detected in pituitary, testis, kidney and ileum. Detected also in spleen and lung. As to expression, mainly expressed in the jejenum (at protein level).

It is found in the basolateral cell membrane. It localises to the apical cell membrane. Its subcellular location is the cell projection. The protein localises to the dendrite. The protein resides in the axon. It is found in the perikaryon. It localises to the presynapse. Its subcellular location is the postsynapse. It carries out the reaction 2 hydrogencarbonate(out) + chloride(in) + Na(+)(out) = 2 hydrogencarbonate(in) + chloride(out) + Na(+)(in). Its function is as follows. Sodium/bicarbonate cotransporter which plays an important role in regulating intracellular pH. Has been shown to act as a sodium/bicarbonate cotransporter in exchange for intracellular chloride. Has also been shown to act as a sodium/biocarbonate cotransporter which does not couple net influx of bicarbonate to net efflux of chloride, with the observed chloride efflux being due to chloride self-exchange. Controls neuronal pH and may contribute to the secretion of cerebrospinal fluid. Acting on presynaptic intracellular pH, it promotes GABA release, reduces the excitability of CA1 pyramidal neurons, and modulates short-term synaptic plasticity. Required in retinal cells to maintain normal pH which is necessary for normal vision. In the kidney, likely to mediate bicarbonate reclamation in the apical membrane of the proximal tubules. Sodium/bicarbonate cotransporter which mediates cotransport of sodium and bicarbonate in association with an efflux of intracellular chloride and is involved in NaCl absorption in the small intestine. In Rattus norvegicus (Rat), this protein is Sodium-driven chloride bicarbonate exchanger.